The sequence spans 273 residues: SPRY domain-containing SOCS box protein 4 (273 aa).

A disordered region spans residues 1 to 34; the sequence is MGQKLSGSLKSVEVREPALRPAKRELRGAEPGRP. Positions 12 to 34 are enriched in basic and acidic residues; sequence VEVREPALRPAKRELRGAEPGRP. Residues 34-233 enclose the B30.2/SPRY domain; that stretch reads PARLDQLLDM…MRYINGLDPE (200 aa). Residues 234–273 enclose the SOCS box domain; it reads PLPLMDLCRRSIRSALGRQRLQDISSLPLPQSLKNYLQYQ.

Belongs to the SPSB family. Component of the probable ECS(SPSB4) E3 ubiquitin-protein ligase complex which contains CUL5, RNF7/RBX2, Elongin BC complex and SPSB4. Interacts with CUL5; RNF7; ELOB and ELOC. Interacts with MET. Interacts (via B30.2/SPRY domain) with PAWR; this interaction occurs in association with the Elongin BC complex. Interacts with NOS2. Interacts with EPHB2.

The protein localises to the cytoplasm. It is found in the cytosol. It participates in protein modification; protein ubiquitination. Its function is as follows. Substrate recognition component of a SCF-like ECS (Elongin BC-CUL2/5-SOCS-box protein) E3 ubiquitin-protein ligase complex which mediates the ubiquitination and subsequent proteasomal degradation of target proteins. Negatively regulates nitric oxide (NO) production and limits cellular toxicity in activated macrophages by mediating the ubiquitination and proteasomal degradation of NOS2. Acts as a bridge which links NOS2 with the ECS E3 ubiquitin ligase complex components ELOC and CUL5. Diminishes EphB2-dependent cell repulsive responses by mediating the ubiquitination and degradation of EphB2/CTF2. Regulates cellular clock function by mediating the ubiquitin/proteasome-dependent degradation of the circadian transcriptional repressor NR1D1. The chain is SPRY domain-containing SOCS box protein 4 (SPSB4) from Homo sapiens (Human).